Reading from the N-terminus, the 205-residue chain is MFEYVTGYVEYVGPEYVVIDHNGIGYQIFTPNPYVFQRSKQEIRVYTYHYVREDIMALYGFKTREERLLFTKLLGVSGIGPKGALAILASGQTGQVVQAIEHEDEKFLVKFPGVGKKTARQMILDLKGKLADVVPDAFVDLFSDTERFDEKKGSSAELDEALEALRALGYAEREVSRVVPELLKESLTTDQYIKKALSLLLNGKR.

Residues 1–62 (MFEYVTGYVE…EDIMALYGFK (62 aa)) are domain I. The interval 63-141 (TREERLLFTK…DVVPDAFVDL (79 aa)) is domain II. The flexible linker stretch occupies residues 142 to 152 (FSDTERFDEKK). The domain III stretch occupies residues 153–205 (GSSAELDEALEALRALGYAEREVSRVVPELLKESLTTDQYIKKALSLLLNGKR).

The protein belongs to the RuvA family. Homotetramer. Forms an RuvA(8)-RuvB(12)-Holliday junction (HJ) complex. HJ DNA is sandwiched between 2 RuvA tetramers; dsDNA enters through RuvA and exits via RuvB. An RuvB hexamer assembles on each DNA strand where it exits the tetramer. Each RuvB hexamer is contacted by two RuvA subunits (via domain III) on 2 adjacent RuvB subunits; this complex drives branch migration. In the full resolvosome a probable DNA-RuvA(4)-RuvB(12)-RuvC(2) complex forms which resolves the HJ.

Its subcellular location is the cytoplasm. Functionally, the RuvA-RuvB-RuvC complex processes Holliday junction (HJ) DNA during genetic recombination and DNA repair, while the RuvA-RuvB complex plays an important role in the rescue of blocked DNA replication forks via replication fork reversal (RFR). RuvA specifically binds to HJ cruciform DNA, conferring on it an open structure. The RuvB hexamer acts as an ATP-dependent pump, pulling dsDNA into and through the RuvAB complex. HJ branch migration allows RuvC to scan DNA until it finds its consensus sequence, where it cleaves and resolves the cruciform DNA. This is Holliday junction branch migration complex subunit RuvA from Bacillus cereus (strain ATCC 14579 / DSM 31 / CCUG 7414 / JCM 2152 / NBRC 15305 / NCIMB 9373 / NCTC 2599 / NRRL B-3711).